A 634-amino-acid chain; its full sequence is Factor of DNA methylation 1 (634 aa).

Residues 288–469 (LDEKKNLHQA…LESMNSVLMT (182 aa)) are a coiled coil. A compositionally biased stretch (basic and acidic residues) spans 349-364 (ELDRQKLDEDKRKSDA). The disordered stretch occupies residues 349 to 375 (ELDRQKLDEDKRKSDAMNKSLQLASRE).

As to quaternary structure, homodimer. Interacts with IDN2 and AGO4. Forms a complex with IDN2 and FMD2/INDL2. Highly expressed in flowers and at lower levels in roots, leaves and stems.

Forms a complex with IDN2 and FDM2/IDNL2 that is required for RNA-directed DNA methylation (RdDM) and that functions at a downstream step of the RdDM pathway. Required for de novo DNA methylation and 24 nucleotide small interfering RNA (siRNA) accumulation. Binds unmethylated but not methylated DNAs through its coiled-coil domain. May bind double-stranded RNAs (dsRNAs) with 5'-overhangs through its XS domain. However, according to, FMD1 does not bind dsRNAs. The protein is Factor of DNA methylation 1 of Arabidopsis thaliana (Mouse-ear cress).